A 507-amino-acid polypeptide reads, in one-letter code: Chromosomal replication initiator protein DnaA (507 aa).

The segment at 1–112 (MTDDPGSGFT…PATDEADDTT (112 aa)) is domain I, interacts with DnaA modulators. The segment at 99–162 (RIAPPATDEA…ERPRNTDSAT (64 aa)) is disordered. Residues 113–127 (VPPSENPATTSPDTT) are compositionally biased toward polar residues. The interval 113-166 (VPPSENPATTSPDTTTDNDEIDDSAAARGDNQHSWPSYFTERPRNTDSATAGVT) is domain II. The interval 167 to 383 (SLNRRYTFDT…GALIRVTAFA (217 aa)) is domain III, AAA+ region. 4 residues coordinate ATP: glycine 211, glycine 213, lysine 214, and threonine 215. Residues 384 to 507 (SLNKTPIDKA…TTRIRQRSKR (124 aa)) form a domain IV, binds dsDNA region.

Belongs to the DnaA family. As to quaternary structure, oligomerizes as a right-handed, spiral filament on DNA at oriC.

The protein localises to the cytoplasm. In terms of biological role, plays an essential role in the initiation and regulation of chromosomal replication. ATP-DnaA binds to the origin of replication (oriC) to initiate formation of the DNA replication initiation complex once per cell cycle. Binds the DnaA box (a 9 base pair repeat at the origin) and separates the double-stranded (ds)DNA. Forms a right-handed helical filament on oriC DNA; dsDNA binds to the exterior of the filament while single-stranded (ss)DNA is stabiized in the filament's interior. The ATP-DnaA-oriC complex binds and stabilizes one strand of the AT-rich DNA unwinding element (DUE), permitting loading of DNA polymerase. After initiation quickly degrades to an ADP-DnaA complex that is not apt for DNA replication. Binds acidic phospholipids. This Mycobacterium bovis (strain ATCC BAA-935 / AF2122/97) protein is Chromosomal replication initiator protein DnaA.